The chain runs to 208 residues: Probable nicotinate-nucleotide adenylyltransferase (208 aa).

The protein belongs to the NadD family.

It catalyses the reaction nicotinate beta-D-ribonucleotide + ATP + H(+) = deamido-NAD(+) + diphosphate. It participates in cofactor biosynthesis; NAD(+) biosynthesis; deamido-NAD(+) from nicotinate D-ribonucleotide: step 1/1. In terms of biological role, catalyzes the reversible adenylation of nicotinate mononucleotide (NaMN) to nicotinic acid adenine dinucleotide (NaAD). This chain is Probable nicotinate-nucleotide adenylyltransferase, found in Kineococcus radiotolerans (strain ATCC BAA-149 / DSM 14245 / SRS30216).